The following is a 155-amino-acid chain: Protein-export protein SecB 1 (155 aa).

The protein belongs to the SecB family. As to quaternary structure, homotetramer, a dimer of dimers. One homotetramer interacts with 1 SecA dimer.

It localises to the cytoplasm. Its function is as follows. One of the proteins required for the normal export of preproteins out of the cell cytoplasm. It is a molecular chaperone that binds to a subset of precursor proteins, maintaining them in a translocation-competent state. It also specifically binds to its receptor SecA. This is Protein-export protein SecB 1 from Polaromonas naphthalenivorans (strain CJ2).